The sequence spans 122 residues: Large ribosomal subunit protein uL14 (122 aa).

Belongs to the universal ribosomal protein uL14 family. Part of the 50S ribosomal subunit. Forms a cluster with proteins L3 and L19. In the 70S ribosome, L14 and L19 interact and together make contacts with the 16S rRNA in bridges B5 and B8.

Its function is as follows. Binds to 23S rRNA. Forms part of two intersubunit bridges in the 70S ribosome. In Xanthomonas oryzae pv. oryzae (strain MAFF 311018), this protein is Large ribosomal subunit protein uL14.